The following is a 295-amino-acid chain: 4-diphosphocytidyl-2-C-methyl-D-erythritol kinase (295 aa).

K18 is an active-site residue. 101 to 111 is a binding site for ATP; it reads PMGGGIGGGSS. The active site involves D143.

The protein belongs to the GHMP kinase family. IspE subfamily.

The enzyme catalyses 4-CDP-2-C-methyl-D-erythritol + ATP = 4-CDP-2-C-methyl-D-erythritol 2-phosphate + ADP + H(+). It functions in the pathway isoprenoid biosynthesis; isopentenyl diphosphate biosynthesis via DXP pathway; isopentenyl diphosphate from 1-deoxy-D-xylulose 5-phosphate: step 3/6. In terms of biological role, catalyzes the phosphorylation of the position 2 hydroxy group of 4-diphosphocytidyl-2C-methyl-D-erythritol. The polypeptide is 4-diphosphocytidyl-2-C-methyl-D-erythritol kinase (Vibrio vulnificus (strain YJ016)).